A 275-amino-acid chain; its full sequence is Transmembrane protein 106B (275 aa).

The segment at 1-24 is disordered; that stretch reads MGKSFSHLPLHSNKEDGYDGMTST. Gly2 carries N-myristoyl glycine lipidation. The Cytoplasmic segment spans residues 2–97; that stretch reads GKSFSHLPLH…QRLRPRRTKL (96 aa). Residues 98–118 form a helical membrane-spanning segment; it reads YVMASVFVCLLLSGLAVFFLF. Over 119-275 the chain is Lumenal; that stretch reads PRSIDVKYIG…EYLNVLQPQQ (157 aa). N-linked (GlcNAc...) asparagine glycans are attached at residues Asn146, Asn152, Asn165, and Asn184. Residues Cys215 and Cys254 are joined by a disulfide bond. The N-linked (GlcNAc...) asparagine glycan is linked to Asn257.

It belongs to the TMEM106 family. In terms of assembly, can form homomers. Interacts (via N-terminus) with MAP6 (via C-terminus). Interacts (via C-terminus) with the vacuolar-type ATPase subunit ATP6AP1. Interacts (via N-terminus) with AP2M1 and CLTC. Interacts with TMEM106C.

It localises to the late endosome membrane. Its subcellular location is the lysosome membrane. It is found in the cell membrane. Its function is as follows. In neurons, involved in the transport of late endosomes/lysosomes. May be involved in dendrite morphogenesis and maintenance by regulating lysosomal trafficking. May act as a molecular brake for retrograde transport of late endosomes/lysosomes, possibly via its interaction with MAP6. In motoneurons, may mediate the axonal transport of lysosomes and axonal sorting at the initial segment. It remains unclear whether TMEM106B affects the transport of moving lysosomes in the anterograde or retrograde direction in neurites and whether it is particularly important in the sorting of lysosomes in axons or in dendrites. In neurons, may also play a role in the regulation of lysosomal size and responsiveness to stress. Required for proper lysosomal acidification. This Bos taurus (Bovine) protein is Transmembrane protein 106B (TMEM106B).